The chain runs to 1645 residues: Cortactin-binding protein 2 (1645 aa).

5 disordered regions span residues 1-28, 269-293, 366-435, 451-478, and 492-612; these read MATD…EAAK, LKRG…SVSI, IVSS…AALH, GNAN…SRDS, and ALSR…PPKP. The stretch at 119–276 forms a coiled coil; sequence RKMQERMSTQ…EQLKRGNDSK (158 aa). 2 stretches are compositionally biased toward polar residues: residues 407–417 and 451–477; these read QTPTIAPQSHA and GNAN…TSRD. Arginine 495 is modified (asymmetric dimethylarginine). Over residues 580–590 the composition is skewed to polar residues; that stretch reads TMASPPSTLPQ. ANK repeat units lie at residues 706 to 736, 740 to 769, 773 to 802, 806 to 835, 839 to 868, and 909 to 939; these read GRPT…DINY, DGHS…QVNA, NGFT…NINH, EGQT…DRSV, DGWT…PARR, and EGWT…EPER. Residues 868–898 form a disordered region; that stretch reads RNSLHEEEPESGVFDLDQGEESPEGTSKPVI. Residues 1442–1479 form a disordered region; that stretch reads CSRKKGESGAWRKVSTSPRKKSGRFSPPSWSKPGPSEE. Phosphoserine is present on serine 1521. The interval 1551–1645 is disordered; sequence DDLRSFDSPG…EINNNSKEEI (95 aa). Composition is skewed to polar residues over residues 1558-1569 and 1582-1597; these read SPGNSPAFSATV and PFSS…SQSK. The segment covering 1620–1634 has biased composition (low complexity); sequence SQNTKRSSSSSNTRQ. Polar residues predominate over residues 1635-1645; sequence IEINNNSKEEI.

As to quaternary structure, interacts with CTTN/cortactin SH3 domain. Interacts with STRN, STRN4/zinedin and MOB4/phocein; this interactions mediate the association with the STRIPAK core complex and may regulate dendritic spine distribution of the STRIPAK complex in hippocampal neurons. Activation of glutamate receptors weakens the interaction with STRN and STRN4.

It is found in the cytoplasm. Its subcellular location is the cell cortex. The protein resides in the cell projection. It localises to the dendritic spine. Functionally, regulates the dendritic spine distribution of CTTN/cortactin in hippocampal neurons, and thus controls dendritic spinogenesis and dendritic spine maintenance. Associates with the striatin-interacting phosphatase and kinase (STRIPAK) core complex to regulate dendritic spine distribution of the STRIPAK complex in hippocampal neurons. The protein is Cortactin-binding protein 2 (CTTNBP2) of Mustela putorius furo (European domestic ferret).